A 710-amino-acid chain; its full sequence is Dual specificity protein kinase shkE (710 aa).

Composition is skewed to low complexity over residues 83 to 94 (DVSDSNNNNSTS), 107 to 129 (NNNNNNNNNNNNNNNNNNNNNNN), and 197 to 208 (QKQQQSQASIQQ). Disordered regions lie at residues 83-136 (DVSD…PTVI) and 189-232 (QHLT…IPPE). The 259-residue stretch at 237-495 (DVKTDLLGGG…EVTQRMNEVL (259 aa)) folds into the Protein kinase domain. Residues 243–251 (LGGGAYGKV) and K264 each bind ATP. D359 (proton acceptor) is an active-site residue. The region spanning 597–707 (WFHFDISRDI…CPITEIKVPY (111 aa)) is the SH2 domain.

The protein belongs to the protein kinase superfamily. Ser/Thr protein kinase family. SH2 domain-containing protein kinase subfamily.

It is found in the membrane. It carries out the reaction L-seryl-[protein] + ATP = O-phospho-L-seryl-[protein] + ADP + H(+). The catalysed reaction is L-threonyl-[protein] + ATP = O-phospho-L-threonyl-[protein] + ADP + H(+). Its function is as follows. Required for proper chemotaxis and phagocytosis; proper spatiotemporal control of F-actin levels in chemotaxing cells. Negative regulator of the PI3K (phosphatidylinositol 3 kinase) pathway. Predominantly phosphorylates serines and threonines and tyrosines at a lower level. The polypeptide is Dual specificity protein kinase shkE (shkE) (Dictyostelium discoideum (Social amoeba)).